The primary structure comprises 208 residues: Large ribosomal subunit protein uL3 (208 aa).

Residue glutamine 149 is modified to N5-methylglutamine.

This sequence belongs to the universal ribosomal protein uL3 family. Part of the 50S ribosomal subunit. Forms a cluster with proteins L14 and L19. Post-translationally, methylated by PrmB.

Its function is as follows. One of the primary rRNA binding proteins, it binds directly near the 3'-end of the 23S rRNA, where it nucleates assembly of the 50S subunit. The polypeptide is Large ribosomal subunit protein uL3 (Actinobacillus pleuropneumoniae serotype 5b (strain L20)).